A 424-amino-acid polypeptide reads, in one-letter code: Na(+), Li(+), K(+)/H(+) antiporter (424 aa).

12 helical membrane-spanning segments follow: residues 15-35 (VGEF…AIYF), 42-62 (GLAG…NLFG), 74-94 (MLVS…LANS), 105-125 (VAFT…QAMI), 141-161 (FYTT…VLFF), 165-185 (FELL…LRFY), 227-247 (LLFV…DLVI), 274-294 (TSFG…TVVI), 305-325 (WVFF…PMTS), 327-347 (FWIF…VVGL), 367-389 (AASL…TAWF), and 393-415 (WTFI…MFHL).

It belongs to the major facilitator superfamily.

Its subcellular location is the cell membrane. With respect to regulation, norfloxacin transport is inhibited by CCCP. In terms of biological role, exhibits dual functions as a Na(+)(Li(+)/K(+))/H(+) antiporter and a multidrug efflux pump. Catalyzes the efflux of Na(+), Li(+) and K(+) in exchange for external protons. Shows a preference for Na(+), followed by K(+) and Li(+). Can also function as a multidrug efflux pump. Transports ethidium bromide and norfloxacin. The sequence is that of Na(+), Li(+), K(+)/H(+) antiporter from Planococcus maritimus.